Here is a 146-residue protein sequence, read N- to C-terminus: Antiholin-like protein LrgA (146 aa).

4 consecutive transmembrane segments (helical) span residues Y7–I29, I34–I53, L65–M87, and V97–L119.

Belongs to the CidA/LrgA family. LrgA subfamily.

The protein localises to the cell membrane. Functionally, inhibits the expression or activity of extracellular murein hydrolases by interacting, possibly with LrgB, with the holin-like protein CidA. The LrgAB and CidA proteins may affect the proton motive force of the membrane. May be involved in programmed cell death (PCD), possibly triggering PCD in response to antibiotics and environmental stresses. The protein is Antiholin-like protein LrgA of Bacillus subtilis (strain 168).